The primary structure comprises 482 residues: Proline--tRNA ligase (482 aa).

It belongs to the class-II aminoacyl-tRNA synthetase family. ProS type 3 subfamily. In terms of assembly, homodimer.

The protein resides in the cytoplasm. The enzyme catalyses tRNA(Pro) + L-proline + ATP = L-prolyl-tRNA(Pro) + AMP + diphosphate. Catalyzes the attachment of proline to tRNA(Pro) in a two-step reaction: proline is first activated by ATP to form Pro-AMP and then transferred to the acceptor end of tRNA(Pro). The sequence is that of Proline--tRNA ligase from Mycoplasmopsis synoviae (strain 53) (Mycoplasma synoviae).